A 98-amino-acid chain; its full sequence is snRNA-activating protein complex subunit 5 (98 aa).

Residues 75-98 are disordered; the sequence is ALELSTRSHVQEEEEEEEEEEEDS. Residues 86–98 are compositionally biased toward acidic residues; sequence EEEEEEEEEEEDS.

In terms of assembly, part of the SNAPc complex composed of 5 subunits: SNAPC1, SNAPC2, SNAPC3, SNAPC4 and SNAPC5. SNAPC5 interacts with SNAPC4.

It is found in the nucleus. Functionally, part of the SNAPc complex required for the transcription of both RNA polymerase II and III small-nuclear RNA genes. Binds to the proximal sequence element (PSE), a non-TATA-box basal promoter element common to these 2 types of genes. Recruits TBP and BRF2 to the U6 snRNA TATA box. This is snRNA-activating protein complex subunit 5 (SNAPC5) from Bos taurus (Bovine).